The following is a 365-amino-acid chain: 1-deoxy-D-xylulose 5-phosphate reductoisomerase (365 aa).

Thr7, Gly8, Ser9, Ile10, Ala31, Lys32, Asn33, and Asn114 together coordinate NADPH. A 1-deoxy-D-xylulose 5-phosphate-binding site is contributed by Lys115. Glu116 is an NADPH binding site. Asp134 is a Mn(2+) binding site. 1-deoxy-D-xylulose 5-phosphate contacts are provided by Ser135, Glu136, Ser158, and His181. Glu136 provides a ligand contact to Mn(2+). Residue Gly187 coordinates NADPH. Residues Ser194, Asn199, Lys200, and Glu203 each contribute to the 1-deoxy-D-xylulose 5-phosphate site. Residue Glu203 participates in Mn(2+) binding.

The protein belongs to the DXR family. Mg(2+) is required as a cofactor. Requires Mn(2+) as cofactor.

It catalyses the reaction 2-C-methyl-D-erythritol 4-phosphate + NADP(+) = 1-deoxy-D-xylulose 5-phosphate + NADPH + H(+). It functions in the pathway isoprenoid biosynthesis; isopentenyl diphosphate biosynthesis via DXP pathway; isopentenyl diphosphate from 1-deoxy-D-xylulose 5-phosphate: step 1/6. Catalyzes the NADPH-dependent rearrangement and reduction of 1-deoxy-D-xylulose-5-phosphate (DXP) to 2-C-methyl-D-erythritol 4-phosphate (MEP). The polypeptide is 1-deoxy-D-xylulose 5-phosphate reductoisomerase (Campylobacter curvus (strain 525.92)).